The following is a 254-amino-acid chain: rRNA N-glycosylase sapovaccarin-S2 (254 aa).

It belongs to the ribosome-inactivating protein family. Type 1 RIP subfamily. In terms of tissue distribution, expressed in seeds; most abundant in the perisperm.

It carries out the reaction Endohydrolysis of the N-glycosidic bond at one specific adenosine on the 28S rRNA.. Functionally, exhibits N-glycosylase activity. Catalyzes the release of one adenine from a ribosome. Acts as a ribosome-inactivating protein and inhibits protein synthesis. Induces cell death in Huh-7 liver cells. May contribute to the protection against plant pests and predators or play a role in regulating the death of plant cells. The protein is rRNA N-glycosylase sapovaccarin-S2 of Gypsophila vaccaria (Cow soapwort).